Reading from the N-terminus, the 452-residue chain is Glutamyl-tRNA(Gln) amidotransferase subunit A (452 aa).

Catalysis depends on charge relay system residues Lys-56 and Ser-131. The active-site Acyl-ester intermediate is the Ser-155.

Belongs to the amidase family. GatA subfamily. As to quaternary structure, heterotrimer of A, B and C subunits.

It catalyses the reaction L-glutamyl-tRNA(Gln) + L-glutamine + ATP + H2O = L-glutaminyl-tRNA(Gln) + L-glutamate + ADP + phosphate + H(+). Its function is as follows. Allows the formation of correctly charged Gln-tRNA(Gln) through the transamidation of misacylated Glu-tRNA(Gln) in organisms which lack glutaminyl-tRNA synthetase. The reaction takes place in the presence of glutamine and ATP through an activated gamma-phospho-Glu-tRNA(Gln). The polypeptide is Glutamyl-tRNA(Gln) amidotransferase subunit A (Campylobacter concisus (strain 13826)).